The chain runs to 252 residues: tRNA (guanine-N(1)-)-methyltransferase (252 aa).

S-adenosyl-L-methionine is bound by residues glycine 110 and 130–135; that span reads VGDFVL.

This sequence belongs to the RNA methyltransferase TrmD family. In terms of assembly, homodimer.

The protein resides in the cytoplasm. It carries out the reaction guanosine(37) in tRNA + S-adenosyl-L-methionine = N(1)-methylguanosine(37) in tRNA + S-adenosyl-L-homocysteine + H(+). Functionally, specifically methylates guanosine-37 in various tRNAs. This chain is tRNA (guanine-N(1)-)-methyltransferase, found in Magnetococcus marinus (strain ATCC BAA-1437 / JCM 17883 / MC-1).